We begin with the raw amino-acid sequence, 429 residues long: Ribosomal RNA small subunit methyltransferase B (429 aa).

Residues C254–K260, D277, D303, and D322 each bind S-adenosyl-L-methionine. The Nucleophile role is filled by C375.

Belongs to the class I-like SAM-binding methyltransferase superfamily. RsmB/NOP family.

The protein resides in the cytoplasm. It catalyses the reaction cytidine(967) in 16S rRNA + S-adenosyl-L-methionine = 5-methylcytidine(967) in 16S rRNA + S-adenosyl-L-homocysteine + H(+). Functionally, specifically methylates the cytosine at position 967 (m5C967) of 16S rRNA. In Escherichia coli O157:H7, this protein is Ribosomal RNA small subunit methyltransferase B.